The following is a 293-amino-acid chain: Probable porphobilinogen deaminase (293 aa).

Cys-233 is modified (S-(dipyrrolylmethanemethyl)cysteine).

This sequence belongs to the HMBS family. Dipyrromethane is required as a cofactor.

It catalyses the reaction 4 porphobilinogen + H2O = hydroxymethylbilane + 4 NH4(+). The protein operates within porphyrin-containing compound metabolism; protoporphyrin-IX biosynthesis; coproporphyrinogen-III from 5-aminolevulinate: step 2/4. Functionally, tetrapolymerization of the monopyrrole PBG into the hydroxymethylbilane pre-uroporphyrinogen in several discrete steps. This is Probable porphobilinogen deaminase from Saccharolobus islandicus (strain M.16.27) (Sulfolobus islandicus).